The sequence spans 589 residues: ABC transporter G family member 8 (589 aa).

One can recognise an ABC transporter domain in the interval 16–261 (LTTSSISYTI…LLFKGFTVPP (246 aa)). Residue 62-69 (GPSGAGKS) coordinates ATP. The region spanning 311–521 (TEISLLARRF…ALDALLINEY (211 aa)) is the ABC transmembrane type-2 domain. 7 helical membrane-spanning segments follow: residues 335 to 355 (ALEA…IGIG), 365 to 385 (MFAF…PIFI), 412 to 432 (VFLP…YFLI), 441 to 461 (FGYF…FVLF), 470 to 490 (ITGT…SGYF), 499 to 519 (YWLF…LLIN), and 560 to 580 (FNVY…FLAL).

The protein belongs to the ABC transporter superfamily. ABCG family. Eye pigment precursor importer (TC 3.A.1.204) subfamily.

It localises to the membrane. In Arabidopsis thaliana (Mouse-ear cress), this protein is ABC transporter G family member 8 (ABCG8).